The following is a 144-amino-acid chain: Large ribosomal subunit protein uL15 (144 aa).

The tract at residues 1 to 60 is disordered; it reads MKMNTLKPAEGSKQSPKRLGRGIGSGLGKTGGRGHKGQTSRSGGTIRPGFEGGQQPLQRR. The span at 21–31 shows a compositional bias: gly residues; that stretch reads RGIGSGLGKTG.

The protein belongs to the universal ribosomal protein uL15 family. As to quaternary structure, part of the 50S ribosomal subunit.

Its function is as follows. Binds to the 23S rRNA. The sequence is that of Large ribosomal subunit protein uL15 from Hahella chejuensis (strain KCTC 2396).